Here is a 435-residue protein sequence, read N- to C-terminus: 3-phosphoshikimate 1-carboxyvinyltransferase (435 aa).

Residues Lys-28, Ser-29, and Arg-33 each coordinate 3-phosphoshikimate. Position 28 (Lys-28) interacts with phosphoenolpyruvate. Phosphoenolpyruvate is bound by residues Gly-100 and Arg-128. 3-phosphoshikimate is bound by residues Ser-173, Gln-175, Asp-321, and Lys-348. Gln-175 serves as a coordination point for phosphoenolpyruvate. Asp-321 (proton acceptor) is an active-site residue. Arg-352 and Arg-394 together coordinate phosphoenolpyruvate.

This sequence belongs to the EPSP synthase family. Monomer.

The protein localises to the cytoplasm. It carries out the reaction 3-phosphoshikimate + phosphoenolpyruvate = 5-O-(1-carboxyvinyl)-3-phosphoshikimate + phosphate. It functions in the pathway metabolic intermediate biosynthesis; chorismate biosynthesis; chorismate from D-erythrose 4-phosphate and phosphoenolpyruvate: step 6/7. Its function is as follows. Catalyzes the transfer of the enolpyruvyl moiety of phosphoenolpyruvate (PEP) to the 5-hydroxyl of shikimate-3-phosphate (S3P) to produce enolpyruvyl shikimate-3-phosphate and inorganic phosphate. The sequence is that of 3-phosphoshikimate 1-carboxyvinyltransferase from Desulfitobacterium hafniense (strain DSM 10664 / DCB-2).